A 397-amino-acid chain; its full sequence is MAKAKFERNKPHCNIGTIGHVDHGKTSLTAAITKVLAETSGGATFTAYDQIDKAPEEKARGITISTAHVEYETQNRHYAHVDCPGHADYVKNMITGAAQMDGAILVVSAADGPMPQTREHILLARQVGVPALVVFLNKCDMVDDPELLELVELEVRELLSKYDFPGDDIPIVRGSALCALENKSPELGAEAILKLMAEVDKYIPQPERPVDQPFLMPIEDVFSISGRGTVVTGRVERGIVKVGDEVEIVGIRPTVKTTVTGIEMFRKLLDQGQAGDNVGVLLRGTKREDVERGQVVCKPGSVKPHTKFKAEAYILTKEEGGRHTPFFTNYRPQFYFRTTDVTGVVTLPEGTEMVMPGDNISVDVQLIVPIAMEEKLRFAIREGGRTVGAGVVASIIE.

The 198-residue stretch at 10–207 (KPHCNIGTIG…EVDKYIPQPE (198 aa)) folds into the tr-type G domain. The tract at residues 19-26 (GHVDHGKT) is G1. Residue 19–26 (GHVDHGKT) coordinates GTP. T26 contacts Mg(2+). Positions 61-65 (GITIS) are G2. A G3 region spans residues 82–85 (DCPG). GTP contacts are provided by residues 82–86 (DCPGH) and 137–140 (NKCD). The interval 137-140 (NKCD) is G4. The segment at 175–177 (SAL) is G5.

Belongs to the TRAFAC class translation factor GTPase superfamily. Classic translation factor GTPase family. EF-Tu/EF-1A subfamily. Monomer.

It localises to the cytoplasm. It catalyses the reaction GTP + H2O = GDP + phosphate + H(+). GTP hydrolase that promotes the GTP-dependent binding of aminoacyl-tRNA to the A-site of ribosomes during protein biosynthesis. The sequence is that of Elongation factor Tu from Azorhizobium caulinodans (strain ATCC 43989 / DSM 5975 / JCM 20966 / LMG 6465 / NBRC 14845 / NCIMB 13405 / ORS 571).